The chain runs to 413 residues: Divalent metal cation transporter MntH (413 aa).

Helical transmembrane passes span 19-39 (FALM…GNFA), 49-69 (GYQL…IQLM), 94-114 (VWFY…AEFI), 122-142 (LVFG…TFLI), 155-175 (LVIG…LFFS), 196-216 (AVLL…IYLH), 240-260 (VAIA…TAAA), 287-307 (AAAL…TVVG), 323-343 (IPLL…ILAG), 349-369 (ILVM…IPLL), and 393-413 (LIVV…ALNL).

This sequence belongs to the NRAMP family.

The protein localises to the cell inner membrane. Functionally, h(+)-stimulated, divalent metal cation uptake system. This chain is Divalent metal cation transporter MntH, found in Erwinia tasmaniensis (strain DSM 17950 / CFBP 7177 / CIP 109463 / NCPPB 4357 / Et1/99).